A 401-amino-acid polypeptide reads, in one-letter code: Probable tRNA sulfurtransferase (401 aa).

A THUMP domain is found at 60–165; that stretch reads EPIIEKLKTV…QDGTYVTCRD (106 aa). ATP contacts are provided by residues 183–184, 208–209, Arg265, Gly287, and Gln296; these read ML and HF.

The protein belongs to the ThiI family.

It is found in the cytoplasm. It carries out the reaction [ThiI sulfur-carrier protein]-S-sulfanyl-L-cysteine + a uridine in tRNA + 2 reduced [2Fe-2S]-[ferredoxin] + ATP + H(+) = [ThiI sulfur-carrier protein]-L-cysteine + a 4-thiouridine in tRNA + 2 oxidized [2Fe-2S]-[ferredoxin] + AMP + diphosphate. The catalysed reaction is [ThiS sulfur-carrier protein]-C-terminal Gly-Gly-AMP + S-sulfanyl-L-cysteinyl-[cysteine desulfurase] + AH2 = [ThiS sulfur-carrier protein]-C-terminal-Gly-aminoethanethioate + L-cysteinyl-[cysteine desulfurase] + A + AMP + 2 H(+). It functions in the pathway cofactor biosynthesis; thiamine diphosphate biosynthesis. Its function is as follows. Catalyzes the ATP-dependent transfer of a sulfur to tRNA to produce 4-thiouridine in position 8 of tRNAs, which functions as a near-UV photosensor. Also catalyzes the transfer of sulfur to the sulfur carrier protein ThiS, forming ThiS-thiocarboxylate. This is a step in the synthesis of thiazole, in the thiamine biosynthesis pathway. The sulfur is donated as persulfide by IscS. This Geobacillus kaustophilus (strain HTA426) protein is Probable tRNA sulfurtransferase.